We begin with the raw amino-acid sequence, 135 residues long: Snaclec rhodocetin subunit gamma (135 aa).

3 cysteine pairs are disulfide-bonded: Cys4/Cys15, Cys32/Cys129, and Cys104/Cys121. The region spanning 11-130 (YDQHCYQAFN…CQAKNPFVCK (120 aa)) is the C-type lectin domain.

It belongs to the snaclec family. As to quaternary structure, heterotetramer of subunit alpha, beta, gamma and delta; only the gamma and the delta subunits are disulfide-linked. Alpha-beta heterodimer and gamma-delta heterodimer associate orthogonally, giving a cruciform conformation. This heterotetramer may covalently dimerizes thanks to the gamma subunit. In terms of tissue distribution, expressed by the venom gland.

It localises to the secreted. Its function is as follows. Potent inhibitor of collagen-induced platelet aggregation. It acts by binding to the integrin alpha2A domain and blocks collagen binding to integrin alpha-2/beta-1 (ITGA2/ITGB1). The gamma/delta subunits mainly contribute to this activity. The chain is Snaclec rhodocetin subunit gamma from Calloselasma rhodostoma (Malayan pit viper).